We begin with the raw amino-acid sequence, 661 residues long: UvrABC system protein C (661 aa).

A GIY-YIG domain is found at 52–130; it reads HKPGVYRMVD…IKRLHPRFNV (79 aa). The 36-residue stretch at 240 to 275 folds into the UVR domain; that stretch reads QSIKNDMVQAMHKAAKNFDFEQAAAYRDRLSALSHI.

It belongs to the UvrC family. Interacts with UvrB in an incision complex.

It localises to the cytoplasm. Its function is as follows. The UvrABC repair system catalyzes the recognition and processing of DNA lesions. UvrC both incises the 5' and 3' sides of the lesion. The N-terminal half is responsible for the 3' incision and the C-terminal half is responsible for the 5' incision. The chain is UvrABC system protein C from Bartonella henselae (strain ATCC 49882 / DSM 28221 / CCUG 30454 / Houston 1) (Rochalimaea henselae).